The chain runs to 1241 residues: ATP-dependent helicase/nuclease subunit A (1241 aa).

The 474-residue stretch at 12 to 485 (SQWTDDQWKA…IDLAKNFRSR (474 aa)) folds into the UvrD-like helicase ATP-binding domain. An ATP-binding site is contributed by 33 to 40 (AAAGSGKT). Residues 505–805 (GEIDYDADAE…RIMTIHKSKG (301 aa)) enclose the UvrD-like helicase C-terminal domain.

Belongs to the helicase family. AddA subfamily. Heterodimer of AddA and AddB/RexB. Mg(2+) is required as a cofactor.

It catalyses the reaction Couples ATP hydrolysis with the unwinding of duplex DNA by translocating in the 3'-5' direction.. The catalysed reaction is ATP + H2O = ADP + phosphate + H(+). The heterodimer acts as both an ATP-dependent DNA helicase and an ATP-dependent, dual-direction single-stranded exonuclease. Recognizes the chi site generating a DNA molecule suitable for the initiation of homologous recombination. The AddA nuclease domain is required for chi fragment generation; this subunit has the helicase and 3' -&gt; 5' nuclease activities. This Bacillus cereus (strain ATCC 10987 / NRS 248) protein is ATP-dependent helicase/nuclease subunit A.